Reading from the N-terminus, the 685-residue chain is DNA ligase (685 aa).

NAD(+)-binding positions include 47-51 (DSEYD), 96-97 (SL), and Glu125. Catalysis depends on Lys127, which acts as the N6-AMP-lysine intermediate. NAD(+)-binding residues include Arg148, Glu185, Lys304, and Lys328. Zn(2+)-binding residues include Cys422, Cys425, Cys440, and Cys446. Positions 605–685 (ADAQPLKGQT…ALLALFAANR (81 aa)) constitute a BRCT domain.

Belongs to the NAD-dependent DNA ligase family. LigA subfamily. The cofactor is Mg(2+). Mn(2+) is required as a cofactor.

It carries out the reaction NAD(+) + (deoxyribonucleotide)n-3'-hydroxyl + 5'-phospho-(deoxyribonucleotide)m = (deoxyribonucleotide)n+m + AMP + beta-nicotinamide D-nucleotide.. Its function is as follows. DNA ligase that catalyzes the formation of phosphodiester linkages between 5'-phosphoryl and 3'-hydroxyl groups in double-stranded DNA using NAD as a coenzyme and as the energy source for the reaction. It is essential for DNA replication and repair of damaged DNA. This chain is DNA ligase, found in Shewanella putrefaciens (strain CN-32 / ATCC BAA-453).